The chain runs to 247 residues: Complement C1q subcomponent subunit B (247 aa).

Positions 1-22 (MKTPRGSVLVLLLLNLLRVSWA) are cleaved as a signal peptide. Pyrrolidone carboxylic acid is present on Gln23. Residues Pro29, Pro32, Pro35, Pro47, and Pro50 each carry the 4-hydroxyproline modification. The segment at 30–78 (SIPGIPGIPGKPGSDGKPGTPGTKGEKGLPGLVSHLNENGEKGDPGFPG) is disordered. The Collagen-like domain occupies 39 to 98 (GKPGSDGKPGTPGTKGEKGLPGLVSHLNENGEKGDPGFPGMPGKVGPKGPIGPKGVPGPP). Positions 40 to 52 (KPGSDGKPGTPGT) are enriched in low complexity. 2 positions are modified to 5-hydroxylysine: Lys53 and Lys56. Residue Pro59 is modified to 4-hydroxyproline. Lys71 bears the 5-hydroxylysine mark. 4-hydroxyproline occurs at positions 77 and 80. 2 positions are modified to 5-hydroxylysine: Lys86 and Lys92. Residues Pro95 and Pro98 each carry the 4-hydroxyproline modification. 5-hydroxylysine is present on Lys104. The C1q domain maps to 111–247 (KATQKIAFSA…GFMLFPDTEA (137 aa)). Cys175 and Cys192 form a disulfide bridge. Ca(2+) is bound by residues Asp193, Tyr194, and Gln200.

Core component of the complement C1 complex, a calcium-dependent complex composed of 1 molecule of the C1Q subcomplex, 2 molecules of C1R and 2 molecules of C1S. The C1Q subcomplex is composed 18 subunits: 3 chains of C1QA, C1QB, and C1QC trimerize to form 6 collagen-like triple helices connected to six globular ligand-recognition modules (C1q domain). Post-translationally, hydroxylated on lysine and proline residues. Hydroxylated lysine residues can be glycosylated. Bovine C1Q contains up to 66.3 hydroxylysine-galactosylglucose residues. Total percentage hydroxylysine residues glycosylated is 92.0%. Contains no hydroxylysine-monosaccharides.

The protein localises to the secreted. Its subcellular location is the cell surface. The C1Q subcomplex is inhibited by sulfated molecules, such as triterpenoid sulfates, heparan sulfate, or chondroitin sulfates. Functionally, core component of the complement C1 complex, a multiprotein complex that initiates the classical pathway of the complement system, a cascade of proteins that leads to phagocytosis and breakdown of pathogens and signaling that strengthens the adaptive immune system. The classical complement pathway is initiated by the C1Q subcomplex of the C1 complex, which specifically binds IgG or IgM immunoglobulins complexed with antigens, forming antigen-antibody complexes on the surface of pathogens: C1QA, together with C1QB and C1QC, specifically recognizes and binds the Fc regions of IgG or IgM via its C1q domain. Immunoglobulin-binding activates the proenzyme C1R, which cleaves C1S, initiating the proteolytic cascade of the complement system. The C1Q subcomplex is activated by a hexamer of IgG complexed with antigens, while it is activated by a pentameric IgM. The C1Q subcomplex also recognizes and binds phosphatidylserine exposed on the surface of cells undergoing programmed cell death, possibly promoting activation of the complement system. This Bos taurus (Bovine) protein is Complement C1q subcomponent subunit B (C1QB).